Consider the following 159-residue polypeptide: Keratin-associated protein 9-8 (159 aa).

15 tandem repeats follow at residues Cys8–Thr12, Cys13–Thr17, Cys32–Ser36, Cys37–Ser41, Cys46–Thr50, Cys51–Thr55, Cys56–Ile60, Cys65–Ser69, Cys70–Pro74, Cys75–Thr79, Cys80–Thr84, Cys129–Ala133, Cys134–Thr138, Cys139–Thr142, and Cys153–Ser157. Residues Cys8–Ser157 form a 15 X 5 AA repeats of C-C-[RQVSGE]-[SPSNQ]-[TASPI] region.

Belongs to the KRTAP type 9 family. Interacts with hair keratins.

In the hair cortex, hair keratin intermediate filaments are embedded in an interfilamentous matrix, consisting of hair keratin-associated proteins (KRTAP), which are essential for the formation of a rigid and resistant hair shaft through their extensive disulfide bond cross-linking with abundant cysteine residues of hair keratins. The matrix proteins include the high-sulfur and high-glycine-tyrosine keratins. The chain is Keratin-associated protein 9-8 (KRTAP9-8) from Homo sapiens (Human).